The chain runs to 640 residues: Tyrosine--tRNA ligase, mitochondrial (640 aa).

Residue Y100 participates in L-tyrosine binding. D104 is an ATP binding site. Residues P105–H114 carry the 'HIGH' region motif. The L-tyrosine site is built by D144, Y248, Q252, D255, and Q274. The 'KMSKS' region signature appears at K322 to S326. K325 lines the ATP pocket.

This sequence belongs to the class-I aminoacyl-tRNA synthetase family.

It is found in the mitochondrion matrix. The enzyme catalyses tRNA(Tyr) + L-tyrosine + ATP = L-tyrosyl-tRNA(Tyr) + AMP + diphosphate + H(+). Functionally, has both an aminoacyl-tRNA synthetase activity and is involved in the splicing of group I introns. This Podospora anserina (Pleurage anserina) protein is Tyrosine--tRNA ligase, mitochondrial (YTS1).